Consider the following 361-residue polypeptide: MSFKRKAAPQIAPTNLPTGVRLSSKDARWITSSGSSSFDYYLSGGIPMKSLLVIEEDSMDYASVLLKFFAAEGLKQDHVIWLGPSIGEMWFRQLPGDSDRPNKNENSAGEDNHSSPPSKNPQQERMKIAWRYEQVSKTKAPTLDMIPPGYTHSFDLSKNLIVKSDMKYAVSPFPLETGSNPYAPVIESLTRFLSTLTPGTVCRLVLPSILSPAFYSIRATHPQHFIRFIHTLSSLIKCTTSVHLICMCSVPSTLFSRDCEQIFWLENLASAVFSLHPFPVKETVNGLVTQPLGLFRIHKLPLALPFTNHANSNEAGDLSFTVSKRRFTIEPWVLPPLDDEQKDTKISNTNPQKQPVKSLDF.

2 disordered regions span residues 93–124 (QLPGDSDRPNKNENSAGEDNHSSPPSKNPQQE) and 338–361 (DDEQKDTKISNTNPQKQPVKSLDF). Composition is skewed to polar residues over residues 104 to 121 (NENSAGEDNHSSPPSKNP) and 346 to 355 (ISNTNPQKQP).

The protein belongs to the ELP4 family. As to quaternary structure, component of the elongator complex.

The protein localises to the cytoplasm. It localises to the nucleus. Its pathway is tRNA modification; 5-methoxycarbonylmethyl-2-thiouridine-tRNA biosynthesis. Its function is as follows. Component of the elongator complex, a multiprotein complex which is required for multiple tRNA modifications, including mcm5U (5-methoxycarbonylmethyl uridine), mcm5s2U (5-methoxycarbonylmethyl-2-thiouridine), and ncm5U (5-carbamoylmethyl uridine). The elongator complex catalyzes formation of carboxymethyluridine in the wobble base at position 34 in tRNAs. This chain is Elongator complex protein 4, found in Schizosaccharomyces pombe (strain 972 / ATCC 24843) (Fission yeast).